Consider the following 434-residue polypeptide: ATP-dependent protease ATPase subunit HslU (434 aa).

ATP contacts are provided by residues isoleucine 18, 60–65 (GVGKTE), aspartate 247, glutamate 312, and arginine 384.

This sequence belongs to the ClpX chaperone family. HslU subfamily. A double ring-shaped homohexamer of HslV is capped on each side by a ring-shaped HslU homohexamer. The assembly of the HslU/HslV complex is dependent on binding of ATP.

The protein localises to the cytoplasm. Functionally, ATPase subunit of a proteasome-like degradation complex; this subunit has chaperone activity. The binding of ATP and its subsequent hydrolysis by HslU are essential for unfolding of protein substrates subsequently hydrolyzed by HslV. HslU recognizes the N-terminal part of its protein substrates and unfolds these before they are guided to HslV for hydrolysis. In Brucella anthropi (strain ATCC 49188 / DSM 6882 / CCUG 24695 / JCM 21032 / LMG 3331 / NBRC 15819 / NCTC 12168 / Alc 37) (Ochrobactrum anthropi), this protein is ATP-dependent protease ATPase subunit HslU.